The primary structure comprises 316 residues: Geminin coiled-coil domain-containing protein 1 (316 aa).

The stretch at 82-117 (QISANKQLQDTLLQKEEELSRLHEENNKLKEFLNSA) forms a coiled coil. 2 stretches are compositionally biased toward polar residues: residues 134-155 (GQSS…STPG) and 207-234 (MSLQ…QAAT). 2 disordered regions span residues 134 to 160 (GQSS…KAKR) and 207 to 269 (MSLQ…DVAP). Thr153 bears the Phosphothreonine; by cdk2 mark. Over residues 235 to 252 (SCSLSPSQCSSASLPESE) the composition is skewed to low complexity. Over residues 253–262 (TASPLSSPTY) the composition is skewed to polar residues.

It belongs to the GEMC1 family. Interacts with topbp1. Interacts with Cdc45l and the kinase cdk2-cyclin-E (the interaction is direct). Post-translationally, highly phosphorylated by cdk2; stimulates initiation of DNA replication. As to expression, expressed in most tissues. Enriched in proliferating cells from skin and gut.

It is found in the nucleus. Functionally, regulator of DNA replication. Promotes initiation of chromosomal DNA replication by mediating topbp1- and cdk2-dependent recruitment of cdc45l onto replication origins. The sequence is that of Geminin coiled-coil domain-containing protein 1 (gmnc) from Xenopus laevis (African clawed frog).